A 23-amino-acid chain; its full sequence is Coenzyme PQQ synthesis protein A (23 aa).

A cross-link (pyrroloquinoline quinone (Glu-Tyr)) is located at residues 15 to 19 (EVTLY).

This sequence belongs to the PqqA family.

It participates in cofactor biosynthesis; pyrroloquinoline quinone biosynthesis. Functionally, required for coenzyme pyrroloquinoline quinone (PQQ) biosynthesis. PQQ is probably formed by cross-linking a specific glutamate to a specific tyrosine residue and excising these residues from the peptide. This Pseudomonas aeruginosa (strain UCBPP-PA14) protein is Coenzyme PQQ synthesis protein A.